A 137-amino-acid chain; its full sequence is Peptide methionine sulfoxide reductase MsrB (137 aa).

The MsrB domain maps to 7–129 (PTENIEKLTD…NSASLNFVDD (123 aa)). Residues Cys-46, Cys-49, Cys-95, and Cys-98 each contribute to the Zn(2+) site. The Nucleophile role is filled by Cys-118.

This sequence belongs to the MsrB Met sulfoxide reductase family. Zn(2+) is required as a cofactor.

The enzyme catalyses L-methionyl-[protein] + [thioredoxin]-disulfide + H2O = L-methionyl-(R)-S-oxide-[protein] + [thioredoxin]-dithiol. This chain is Peptide methionine sulfoxide reductase MsrB, found in Yersinia enterocolitica serotype O:8 / biotype 1B (strain NCTC 13174 / 8081).